The following is a 194-amino-acid chain: Peptidyl-tRNA hydrolase (194 aa).

Y17 lines the tRNA pocket. The active-site Proton acceptor is the H22. Residues F68, N70, and N116 each coordinate tRNA.

It belongs to the PTH family. Monomer.

The protein localises to the cytoplasm. The catalysed reaction is an N-acyl-L-alpha-aminoacyl-tRNA + H2O = an N-acyl-L-amino acid + a tRNA + H(+). Its function is as follows. Hydrolyzes ribosome-free peptidyl-tRNAs (with 1 or more amino acids incorporated), which drop off the ribosome during protein synthesis, or as a result of ribosome stalling. In terms of biological role, catalyzes the release of premature peptidyl moieties from peptidyl-tRNA molecules trapped in stalled 50S ribosomal subunits, and thus maintains levels of free tRNAs and 50S ribosomes. This chain is Peptidyl-tRNA hydrolase, found in Haemophilus ducreyi (strain 35000HP / ATCC 700724).